The sequence spans 239 residues: UPF0173 metal-dependent hydrolase Dvul_0081 (239 aa).

This sequence belongs to the UPF0173 family.

This chain is UPF0173 metal-dependent hydrolase Dvul_0081, found in Nitratidesulfovibrio vulgaris (strain DP4) (Desulfovibrio vulgaris).